Reading from the N-terminus, the 277-residue chain is Methylamine utilization protein MauF (277 aa).

The next 7 membrane-spanning stretches (helical) occupy residues 33-53, 59-79, 111-131, 132-152, 179-199, 205-225, and 257-277; these read IAVL…LASA, LWAV…WSPC, YGLG…IAGF, SGFG…YGAH, WVIG…YVQT, MTLA…VALF, and ALAD…LALI.

Its subcellular location is the cell membrane. It participates in one-carbon metabolism; methylamine degradation. The protein is Methylamine utilization protein MauF (mauF) of Paracoccus denitrificans.